The primary structure comprises 251 residues: Ubiquinone/menaquinone biosynthesis C-methyltransferase UbiE (251 aa).

S-adenosyl-L-methionine-binding positions include Thr74, Asp95, 123 to 124 (NA), and Ser140.

The protein belongs to the class I-like SAM-binding methyltransferase superfamily. MenG/UbiE family.

It carries out the reaction a 2-demethylmenaquinol + S-adenosyl-L-methionine = a menaquinol + S-adenosyl-L-homocysteine + H(+). The catalysed reaction is a 2-methoxy-6-(all-trans-polyprenyl)benzene-1,4-diol + S-adenosyl-L-methionine = a 5-methoxy-2-methyl-3-(all-trans-polyprenyl)benzene-1,4-diol + S-adenosyl-L-homocysteine + H(+). Its pathway is quinol/quinone metabolism; menaquinone biosynthesis; menaquinol from 1,4-dihydroxy-2-naphthoate: step 2/2. It functions in the pathway cofactor biosynthesis; ubiquinone biosynthesis. Methyltransferase required for the conversion of demethylmenaquinol (DMKH2) to menaquinol (MKH2) and the conversion of 2-polyprenyl-6-methoxy-1,4-benzoquinol (DDMQH2) to 2-polyprenyl-3-methyl-6-methoxy-1,4-benzoquinol (DMQH2). The chain is Ubiquinone/menaquinone biosynthesis C-methyltransferase UbiE from Escherichia coli O1:K1 / APEC.